Consider the following 205-residue polypeptide: Holliday junction branch migration complex subunit RuvA (205 aa).

Positions 1-64 (MIGRLRGVLV…EDAQLLYGFI (64 aa)) are domain I. Residues 65-143 (TKQERALFRL…SLLETSAGSE (79 aa)) are domain II. The segment at 144–156 (REFMLKSNYTPAP) is flexible linker. The tract at residues 157-205 (VVNTAEEDAIAALLSLGYKPAQASKAVSAAFKEGMSSEDLIKSSLKSML) is domain III.

Belongs to the RuvA family. Homotetramer. Forms an RuvA(8)-RuvB(12)-Holliday junction (HJ) complex. HJ DNA is sandwiched between 2 RuvA tetramers; dsDNA enters through RuvA and exits via RuvB. An RuvB hexamer assembles on each DNA strand where it exits the tetramer. Each RuvB hexamer is contacted by two RuvA subunits (via domain III) on 2 adjacent RuvB subunits; this complex drives branch migration. In the full resolvosome a probable DNA-RuvA(4)-RuvB(12)-RuvC(2) complex forms which resolves the HJ.

The protein resides in the cytoplasm. Its function is as follows. The RuvA-RuvB-RuvC complex processes Holliday junction (HJ) DNA during genetic recombination and DNA repair, while the RuvA-RuvB complex plays an important role in the rescue of blocked DNA replication forks via replication fork reversal (RFR). RuvA specifically binds to HJ cruciform DNA, conferring on it an open structure. The RuvB hexamer acts as an ATP-dependent pump, pulling dsDNA into and through the RuvAB complex. HJ branch migration allows RuvC to scan DNA until it finds its consensus sequence, where it cleaves and resolves the cruciform DNA. This is Holliday junction branch migration complex subunit RuvA from Shewanella woodyi (strain ATCC 51908 / MS32).